The sequence spans 146 residues: Large ribosomal subunit protein uL11 (146 aa).

It belongs to the universal ribosomal protein uL11 family. In terms of assembly, part of the ribosomal stalk of the 50S ribosomal subunit. Interacts with L10 and the large rRNA to form the base of the stalk. L10 forms an elongated spine to which L12 dimers bind in a sequential fashion forming a multimeric L10(L12)X complex. In terms of processing, one or more lysine residues are methylated.

Functionally, forms part of the ribosomal stalk which helps the ribosome interact with GTP-bound translation factors. This Wolbachia pipientis wMel protein is Large ribosomal subunit protein uL11.